The primary structure comprises 564 residues: MQAARKRWPPSVAFWSPSPKHYVRVDRDSLRETRRLASSLRRNALAARVARVKAGMLRAELGNLSQLQIAHAHGVLADLARLEQATALHVAGDGRGSGNPPTSPGQGHPLSWGNSDSHGGGGGPGGGGGGELLITISPDGPTFSVKDDFRTEFISGLYTRQSQWLPFYGPWYAAMTDSAMQRRVFPKELKGNVNFQNSTSLKLMTGLLEVLASATEDFYTDGRNLSDVNAALCLLNGYYCLRTPAPLPSTYGELLADLDKKMEFLIADLKRDASNTDFSFAFSNPRQLETVAPLNRQGAYAPDFFGRHKMFAVMSDAGMFPNTKQTAASAQDPGARDIVYLITNAVFGENVPPFITYQLNLRTGLKALELLIVVYIVLENAHVQHNTVNRRLQLPALLGDQYKRPAAQRPQPQQPAAMFKKGFLFSFVVKNYMVPVLTRRPQTPASSLFPGAVLLALETADAASAGGGSGQTLGGHLINLSGKKYDQLFDVLNQKLTFRDVQGLIGAQTALRLTLERGLNLLLSKPSPLTSATEVISTQFGGGDDYDSLYFLILGCLPVTMAVV.

The segment at 1–45 (MQAARKRWPPSVAFWSPSPKHYVRVDRDSLRETRRLASSLRRNAL) is interaction with major capsid protein/MCP. Residues 91-133 (AGDGRGSGNPPTSPGQGHPLSWGNSDSHGGGGGPGGGGGGELL) are disordered. A compositionally biased stretch (gly residues) spans 118–131 (HGGGGGPGGGGGGE).

This sequence belongs to the herpesviridae CVC2 protein family. In terms of assembly, heterodimerizes with CVC1. Interacts with major capsid protein/MCP and triplex capsid protein 1/TRX1 at the pentamer vertices. Interacts with the large tegument protein/LTP.

Its subcellular location is the virion. The protein resides in the host nucleus. In terms of biological role, capsid vertex-specific component that plays a role during viral DNA encapsidation, assuring correct genome cleavage and presumably stabilizing capsids that contain full-length viral genomes. Participates in the interaction between the capsid and the tegument through interaction with the large tegument protein/LTP. In Equus caballus (Horse), this protein is Capsid vertex component 2.